The chain runs to 207 residues: Dephospho-CoA kinase (207 aa).

Positions 10–207 (TLGLTGGIGS…FYLTLRGGQS (198 aa)) constitute a DPCK domain. 18 to 23 (GSGKSA) provides a ligand contact to ATP.

This sequence belongs to the CoaE family.

It is found in the cytoplasm. The enzyme catalyses 3'-dephospho-CoA + ATP = ADP + CoA + H(+). The protein operates within cofactor biosynthesis; coenzyme A biosynthesis; CoA from (R)-pantothenate: step 5/5. Functionally, catalyzes the phosphorylation of the 3'-hydroxyl group of dephosphocoenzyme A to form coenzyme A. This is Dephospho-CoA kinase from Pseudomonas fluorescens (strain ATCC BAA-477 / NRRL B-23932 / Pf-5).